A 108-amino-acid polypeptide reads, in one-letter code: uncharacterized protein (108 aa).

A run of 2 helical transmembrane segments spans residues 5 to 27 (TVYG…QLEI) and 83 to 105 (IFLM…LNIF).

The protein resides in the membrane. This is an uncharacterized protein from Schizosaccharomyces pombe (strain 972 / ATCC 24843) (Fission yeast).